Consider the following 118-residue polypeptide: Large ribosomal subunit protein bL20 (118 aa).

The protein belongs to the bacterial ribosomal protein bL20 family.

Binds directly to 23S ribosomal RNA and is necessary for the in vitro assembly process of the 50S ribosomal subunit. It is not involved in the protein synthesizing functions of that subunit. This is Large ribosomal subunit protein bL20 from Yersinia enterocolitica serotype O:8 / biotype 1B (strain NCTC 13174 / 8081).